Here is a 127-residue protein sequence, read N- to C-terminus: Holo-[acyl-carrier-protein] synthase (127 aa).

Mg(2+) contacts are provided by D9 and E58.

The protein belongs to the P-Pant transferase superfamily. AcpS family. The cofactor is Mg(2+).

It localises to the cytoplasm. It carries out the reaction apo-[ACP] + CoA = holo-[ACP] + adenosine 3',5'-bisphosphate + H(+). Functionally, transfers the 4'-phosphopantetheine moiety from coenzyme A to a Ser of acyl-carrier-protein. The polypeptide is Holo-[acyl-carrier-protein] synthase (Shewanella baltica (strain OS185)).